We begin with the raw amino-acid sequence, 389 residues long: Nicotinamide-nucleotide adenylyltransferase (389 aa).

Residues 380-383 (KKQK) carry the Nuclear localization signal motif.

This sequence belongs to the eukaryotic NMN adenylyltransferase family. As to expression, abundantly expressed in neuronal and muscle cells. Present at relatively low levels at the neuromuscular junction. Expressed in the eye; present in photoreceptor cells and various neurons in the lamina cortex and medulla cortex and at low levels in the lamina.

The protein localises to the nucleus. It is found in the cytoplasm. The protein resides in the presynaptic active zone. The enzyme catalyses beta-nicotinamide D-ribonucleotide + ATP + H(+) = diphosphate + NAD(+). It carries out the reaction nicotinate beta-D-ribonucleotide + ATP + H(+) = deamido-NAD(+) + diphosphate. It functions in the pathway cofactor biosynthesis; NAD(+) biosynthesis; NAD(+) from nicotinamide D-ribonucleotide: step 1/1. It participates in cofactor biosynthesis; NAD(+) biosynthesis; deamido-NAD(+) from nicotinate D-ribonucleotide: step 1/1. Its function is as follows. Catalyzes the formation of NAD(+) from nicotinamide mononucleotide (NMN) and ATP. Essential for viability. Stress-response chaperone protein that prevents toxic aggregation of proteins and promotes proteasome-mediated degradation of misfolded proteins; this is independent of its NAD(+) synthesis activity. Neuroprotective in response to toxic protein aggregation, for example by overexpressed Atx-1/ataxin-1. Required for maintenance and integrity of mature neurons, protecting them from neuronal activity-induced neurodegeneration. Required for the maintenance of axonal and dendritic integrity in both central and peripheral neurons. Chaperone function and neuroprotective roles are largely independent of NAD(+) synthesis activity. Catalyzes the formation of NAD(+) from nicotinamide mononucleotide (NMN) and ATP. Has, or stimulates, chaperone holdase activity but not refoldase activity. Does not have neuroprotective properties and may stimulate apoptosis and neurodegeneration in response to toxic protein aggregates. Functionally, catalyzes the formation of NAD(+) from nicotinamide mononucleotide (NMN) and ATP. Has, or stimulates, chaperone holdase and refoldase activity. Neuroprotective and reduces the toxic load of protein aggregates, preventing apoptosis and neurodegeneration. Promotes clearance of nuclear misfolded protein aggregates. The sequence is that of Nicotinamide-nucleotide adenylyltransferase from Drosophila melanogaster (Fruit fly).